Here is a 75-residue protein sequence, read N- to C-terminus: Small ribosomal subunit protein bS18 (75 aa).

It belongs to the bacterial ribosomal protein bS18 family. In terms of assembly, part of the 30S ribosomal subunit. Forms a tight heterodimer with protein bS6.

Its function is as follows. Binds as a heterodimer with protein bS6 to the central domain of the 16S rRNA, where it helps stabilize the platform of the 30S subunit. In Wigglesworthia glossinidia brevipalpis, this protein is Small ribosomal subunit protein bS18.